A 572-amino-acid polypeptide reads, in one-letter code: Urease subunit alpha (572 aa).

The 439-residue stretch at 134–572 folds into the Urease domain; sequence GGIDAHVHFI…LPMAQRYFLF (439 aa). Ni(2+) contacts are provided by His139, His141, and Lys222. Position 222 is an N6-carboxylysine (Lys222). His224 contributes to the substrate binding site. His251 and His277 together coordinate Ni(2+). His325 functions as the Proton donor in the catalytic mechanism. Asp365 is a Ni(2+) binding site.

It belongs to the metallo-dependent hydrolases superfamily. Urease alpha subunit family. As to quaternary structure, heterotrimer of UreA (gamma), UreB (beta) and UreC (alpha) subunits. Three heterotrimers associate to form the active enzyme. Ni cation serves as cofactor. Carboxylation allows a single lysine to coordinate two nickel ions.

Its subcellular location is the cytoplasm. It carries out the reaction urea + 2 H2O + H(+) = hydrogencarbonate + 2 NH4(+). It participates in nitrogen metabolism; urea degradation; CO(2) and NH(3) from urea (urease route): step 1/1. The sequence is that of Urease subunit alpha from Synechococcus sp. (strain JA-2-3B'a(2-13)) (Cyanobacteria bacterium Yellowstone B-Prime).